The following is a 493-amino-acid chain: Glutamyl-tRNA(Gln) amidotransferase subunit A (493 aa).

Active-site charge relay system residues include lysine 78 and serine 158. The Acyl-ester intermediate role is filled by serine 182.

The protein belongs to the amidase family. GatA subfamily. Heterotrimer of A, B and C subunits.

The enzyme catalyses L-glutamyl-tRNA(Gln) + L-glutamine + ATP + H2O = L-glutaminyl-tRNA(Gln) + L-glutamate + ADP + phosphate + H(+). In terms of biological role, allows the formation of correctly charged Gln-tRNA(Gln) through the transamidation of misacylated Glu-tRNA(Gln) in organisms which lack glutaminyl-tRNA synthetase. The reaction takes place in the presence of glutamine and ATP through an activated gamma-phospho-Glu-tRNA(Gln). This Azorhizobium caulinodans (strain ATCC 43989 / DSM 5975 / JCM 20966 / LMG 6465 / NBRC 14845 / NCIMB 13405 / ORS 571) protein is Glutamyl-tRNA(Gln) amidotransferase subunit A.